The primary structure comprises 288 residues: General transcription factor IIE subunit 2 (288 aa).

A disordered region spans residues 16–56 (ALTTPAVEKRPSASSESSKKKRAKLELSSTSGSKPSSDGSN). The segment covering 41-56 (ELSSTSGSKPSSDGSN) has biased composition (low complexity). The segment at residues 63–143 (SLSGSSGYKF…YAFKPKYNLK (81 aa)) is a DNA-binding region (TFIIE beta).

The protein belongs to the TFIIE beta subunit family. Tetramer of two alpha and two beta chains.

The protein resides in the nucleus. Its function is as follows. Recruits TFIIH to the initiation complex and stimulates the RNA polymerase II C-terminal domain kinase and DNA-dependent ATPase activities of TFIIH. Both TFIIH and TFIIE are required for promoter clearance by RNA polymerase. This Xenopus laevis (African clawed frog) protein is General transcription factor IIE subunit 2 (gtf2e2).